Consider the following 364-residue polypeptide: Aminomethyltransferase (364 aa).

It belongs to the GcvT family. As to quaternary structure, the glycine cleavage system is composed of four proteins: P, T, L and H.

It catalyses the reaction N(6)-[(R)-S(8)-aminomethyldihydrolipoyl]-L-lysyl-[protein] + (6S)-5,6,7,8-tetrahydrofolate = N(6)-[(R)-dihydrolipoyl]-L-lysyl-[protein] + (6R)-5,10-methylene-5,6,7,8-tetrahydrofolate + NH4(+). Functionally, the glycine cleavage system catalyzes the degradation of glycine. The polypeptide is Aminomethyltransferase (Escherichia coli O127:H6 (strain E2348/69 / EPEC)).